The sequence spans 386 residues: MAARPLITVHSDKGAASESNVTLPAVFRAPIRPDIVNFVHFELKKNGRQPYAVSQKAGHQTSAESWGTGRAVARIPRVRGGGTHRSGQGAFGNMCRGRRMFAPTKTWRRWHRRVNTTQRRHALVSAIAATGIPAVVMSKGHCIEQIPEVPLVVSDSVESIKKTKEAVVVLRRLKAWPDVEKVKNSRRFRAGKGKLRNRRAIQRRGPLIIYGTDNGISRAFRNIPGITLVNVNRLNLLSMAPGGHVGRFCIWTESAFKQLDNIYGTWKRPSAEKSHYNLPMPKMTNTDLSRLLKSDEIQNALREPKKDKARRLQKKNPLKNYRVMMRLNPFAGAQKAAAKAVEQRRLKEKQAKLDQKRGIATPVEGAGKGRPRKTTAKPTKAKAGKK.

A compositionally biased stretch (basic and acidic residues) spans 341-357 (VEQRRLKEKQAKLDQKR). Residues 341-386 (VEQRRLKEKQAKLDQKRGIATPVEGAGKGRPRKTTAKPTKAKAGKK) form a disordered region. Positions 369 to 386 (GRPRKTTAKPTKAKAGKK) are enriched in basic residues.

This sequence belongs to the universal ribosomal protein uL4 family.

This is Large ribosomal subunit protein uL4 (RPL4) from Urechis caupo (Innkeeper worm).